Reading from the N-terminus, the 704-residue chain is Protein kinase C-like 1 (704 aa).

A phosphothreonine; by autocatalysis mark is found at Thr89 and Thr139. Phorbol-ester/DAG-type zinc fingers lie at residues 165–215 (GHQF…IMQC) and 237–287 (PHRF…SNLC). Position 324 is a phosphothreonine; by autocatalysis (Thr324). Residues 375–634 (FNLLKVLGKG…DGPIRQHCFF (260 aa)) enclose the Protein kinase domain. ATP is bound by residues 381–389 (LGKGSFGKV) and Lys404. Asp499 serves as the catalytic Proton acceptor. The 70-residue stretch at 635-704 (RGVDWKRFEN…FSYTNPHFSK (70 aa)) folds into the AGC-kinase C-terminal domain.

Belongs to the protein kinase superfamily. AGC Ser/Thr protein kinase family. PKC subfamily.

It carries out the reaction L-seryl-[protein] + ATP = O-phospho-L-seryl-[protein] + ADP + H(+). The enzyme catalyses L-threonyl-[protein] + ATP = O-phospho-L-threonyl-[protein] + ADP + H(+). Its function is as follows. Diacylglycerol (DAG)-dependent serine/threonine-protein kinase that phosphorylates a range of cellular proteins. Phosphorylates mlk-1, a component of the JNK pathway. Involved in axon regeneration after injury probably by activating the JNK pathway. Plays a role in resistance to fungal infection and in wound healing by promoting expression of antimicrobial peptide nlp-29 in the epidermis downstream of gpa-12 and plc-3 and upstream of tir-1-p38-like pathway. Probably by regulating neuronal transmission in ALA neurons, regulates the decrease in pharyngeal pumping during the quiescent state that precedes each larval molt, downstream of lin-3 and receptor let-23 and phospholipase plc-3. The chain is Protein kinase C-like 1 (tpa-1) from Caenorhabditis elegans.